The primary structure comprises 356 residues: Outer membrane protein Omp38 (356 aa).

An N-terminal signal peptide occupies residues 1-19; sequence MKLSRIALATMLVAAPLAA. The 119-residue stretch at 221–339 folds into the OmpA-like domain; it reads ELTEDLNMEL…RVFATITGSR (119 aa).

The protein belongs to the outer membrane OOP (TC 1.B.6) superfamily. Homotrimer.

The protein resides in the cell outer membrane. In terms of biological role, porin. Induces apoptosis in human cells through caspases-dependent and AIF-dependent pathways. Purified Omp38 enters the cells and localizes to the mitochondria, which leads to a release of proapoptotic molecules such as cytochrome c and AIF (apoptosis-inducing factor). This chain is Outer membrane protein Omp38 (omp38), found in Acinetobacter baumannii (strain ATCC 17978 / DSM 105126 / CIP 53.77 / LMG 1025 / NCDC KC755 / 5377).